Here is a 700-residue protein sequence, read N- to C-terminus: Elongation factor G 2 (700 aa).

Residues 8–290 form the tr-type G domain; sequence ERYRNIGISA…AVIDFLPSPV (283 aa). Residues 17 to 24, 88 to 92, and 142 to 145 each bind GTP; these read AHIDAGKT, DTPGH, and NKMD.

It belongs to the TRAFAC class translation factor GTPase superfamily. Classic translation factor GTPase family. EF-G/EF-2 subfamily.

It localises to the cytoplasm. Its function is as follows. Catalyzes the GTP-dependent ribosomal translocation step during translation elongation. During this step, the ribosome changes from the pre-translocational (PRE) to the post-translocational (POST) state as the newly formed A-site-bound peptidyl-tRNA and P-site-bound deacylated tRNA move to the P and E sites, respectively. Catalyzes the coordinated movement of the two tRNA molecules, the mRNA and conformational changes in the ribosome. This Burkholderia mallei (strain ATCC 23344) protein is Elongation factor G 2.